The primary structure comprises 274 residues: Shikimate dehydrogenase (NADP(+)) (274 aa).

Shikimate-binding positions include 20–22 and Thr-68; that span reads SKS. The active-site Proton acceptor is Lys-72. Asp-84 is a binding site for NADP(+). Positions 93 and 109 each coordinate shikimate. NADP(+)-binding positions include 131–135 and Leu-217; that span reads GAGGA. Tyr-219 is a binding site for shikimate. Gly-240 lines the NADP(+) pocket.

This sequence belongs to the shikimate dehydrogenase family. As to quaternary structure, homodimer.

The enzyme catalyses shikimate + NADP(+) = 3-dehydroshikimate + NADPH + H(+). The protein operates within metabolic intermediate biosynthesis; chorismate biosynthesis; chorismate from D-erythrose 4-phosphate and phosphoenolpyruvate: step 4/7. Involved in the biosynthesis of the chorismate, which leads to the biosynthesis of aromatic amino acids. Catalyzes the reversible NADPH linked reduction of 3-dehydroshikimate (DHSA) to yield shikimate (SA). The sequence is that of Shikimate dehydrogenase (NADP(+)) from Sphingopyxis alaskensis (strain DSM 13593 / LMG 18877 / RB2256) (Sphingomonas alaskensis).